The following is a 313-amino-acid chain: tRNA-cytidine(32) 2-sulfurtransferase (313 aa).

The PP-loop motif signature appears at 54–59; sequence SGGKDS. The [4Fe-4S] cluster site is built by cysteine 129, cysteine 132, and cysteine 220.

This sequence belongs to the TtcA family. As to quaternary structure, homodimer. The cofactor is Mg(2+). It depends on [4Fe-4S] cluster as a cofactor.

The protein localises to the cytoplasm. The catalysed reaction is cytidine(32) in tRNA + S-sulfanyl-L-cysteinyl-[cysteine desulfurase] + AH2 + ATP = 2-thiocytidine(32) in tRNA + L-cysteinyl-[cysteine desulfurase] + A + AMP + diphosphate + H(+). Its pathway is tRNA modification. Its function is as follows. Catalyzes the ATP-dependent 2-thiolation of cytidine in position 32 of tRNA, to form 2-thiocytidine (s(2)C32). The sulfur atoms are provided by the cysteine/cysteine desulfurase (IscS) system. This Methylibium petroleiphilum (strain ATCC BAA-1232 / LMG 22953 / PM1) protein is tRNA-cytidine(32) 2-sulfurtransferase.